The primary structure comprises 682 residues: Transcription factor 12 (682 aa).

The 9aaTAD motif lies at 19–27 (DLLDFSAMF). 3 disordered regions span residues 25 to 122 (AMFS…LYSR), 140 to 219 (LGSP…PPTS), and 281 to 313 (SVSP…ASHT). 2 stretches are compositionally biased toward polar residues: residues 30–48 (PVNS…QFSG) and 56–76 (GTTS…SRGF). A phosphoserine mark is found at serine 47, serine 67, and serine 79. Residues 81 to 93 (HYSDHLNDSRLGA) are compositionally biased toward basic and acidic residues. A Phosphoserine modification is found at serine 98. Polar residues-rich tracts occupy residues 101–121 (PFMN…SLYS) and 144–163 (AQLS…SATS). Residue lysine 110 forms a Glycyl lysine isopeptide (Lys-Gly) (interchain with G-Cter in SUMO2) linkage. Serine 116 is subject to Phosphoserine. Residues 119–140 (LYSRDTGLPGCQSSLLRQDLGL) are leucine-zipper. Lysine 181 is covalently cross-linked (Glycyl lysine isopeptide (Lys-Gly) (interchain with G-Cter in SUMO2)). The segment at 182–196 (KVRKVPPGLPSSVYA) is interaction with RUNX1T1. Polar residues predominate over residues 282-306 (VSPTDINTSLPPMSSFHRGSTSSSP). Position 313 is a phosphothreonine (threonine 313). Serine 333 is subject to Phosphoserine. Disordered regions lie at residues 349–395 (PDHT…SLHS) and 462–580 (SASM…ERRM). Residues 352 to 363 (TSSSFPSNPSTP) are compositionally biased toward low complexity. Composition is skewed to polar residues over residues 364–376 (VGSP…TSQW) and 383–395 (APSS…SLHS). Low complexity predominate over residues 481-492 (SVLSSTVTTSST). Polar residues predominate over residues 506 to 517 (LQSQSGTVVTTE). Basic and acidic residues-rich tracts occupy residues 518 to 530 (IKTE…ENLH) and 536 to 551 (DDMK…DIKV). Lysine 519 is covalently cross-linked (Glycyl lysine isopeptide (Lys-Gly) (interchain with G-Cter in SUMO2)). Serine 540 bears the Phosphoserine mark. A Glycyl lysine isopeptide (Lys-Gly) (interchain with G-Cter in SUMO2) cross-link involves residue lysine 550. Residue threonine 557 is modified to Phosphothreonine. Phosphoserine occurs at positions 558 and 559. Positions 568 to 580 (PEQKIEREKERRM) are enriched in basic and acidic residues. The region spanning 577-630 (ERRMANNARERLRVRDINEAFKELGRMCQLHLKSEKPQTKLLILHQAVAVILSL) is the bHLH domain. Residues lysine 609 and lysine 653 each participate in a glycyl lysine isopeptide (Lys-Gly) (interchain with G-Cter in SUMO2) cross-link. Residues 632 to 655 (QQVRERNLNPKAACLKRREEEKVS) are class A specific domain. Residues 651–682 (EEKVSAVSAEPPTTLPGTHPGLSETTNPMGHM) are disordered. The span at 661–672 (PPTTLPGTHPGL) shows a compositional bias: low complexity. Polar residues predominate over residues 673 to 682 (SETTNPMGHM).

In terms of assembly, efficient DNA binding requires dimerization with another bHLH protein. Forms homo- or heterooligomers with myogenin, E12 and ITF2 proteins. Interacts with PTF1A. Interacts with NEUROD2. Interacts with RUNX1T1. Interacts with AML1-MTG8/ETO (via nervy homology region 2 in oligomerized form). Interacts with BHLHA9. Expressed in several tissues and cell types including skeletal muscle, thymus, and a B-cell line.

It is found in the nucleus. Its function is as follows. Transcriptional regulator. Involved in the initiation of neuronal differentiation. Activates transcription by binding to the E box (5'-CANNTG-3'). May be involved in the functional network that regulates the development of the GnRH axis. This chain is Transcription factor 12 (TCF12), found in Homo sapiens (Human).